The sequence spans 233 residues: Octanoyltransferase (233 aa).

A BPL/LPL catalytic domain is found at 33-216 (GRAQDTVILL…HLVRALSSNG (184 aa)). Substrate is bound by residues 71-78 (RGGRITWH), 146-148 (AIG), and 159-161 (GFA). The Acyl-thioester intermediate role is filled by Cys177.

This sequence belongs to the LipB family.

The protein resides in the cytoplasm. It catalyses the reaction octanoyl-[ACP] + L-lysyl-[protein] = N(6)-octanoyl-L-lysyl-[protein] + holo-[ACP] + H(+). It functions in the pathway protein modification; protein lipoylation via endogenous pathway; protein N(6)-(lipoyl)lysine from octanoyl-[acyl-carrier-protein]: step 1/2. Functionally, catalyzes the transfer of endogenously produced octanoic acid from octanoyl-acyl-carrier-protein onto the lipoyl domains of lipoate-dependent enzymes. Lipoyl-ACP can also act as a substrate although octanoyl-ACP is likely to be the physiological substrate. This chain is Octanoyltransferase, found in Clavibacter michiganensis subsp. michiganensis (strain NCPPB 382).